The chain runs to 151 residues: Transcriptional regulator MraZ (151 aa).

SpoVT-AbrB domains are found at residues 7-53 (EYDC…SQTE) and 82-125 (INEV…SPDL).

Belongs to the MraZ family. In terms of assembly, forms oligomers.

The protein localises to the cytoplasm. The protein resides in the nucleoid. This Cytophaga hutchinsonii (strain ATCC 33406 / DSM 1761 / CIP 103989 / NBRC 15051 / NCIMB 9469 / D465) protein is Transcriptional regulator MraZ.